The following is a 789-amino-acid chain: uncharacterized protein (789 aa).

Disordered regions lie at residues 107-326 (YQQD…NNNN), 426-491 (MLKS…NNNN), 523-625 (SVNF…ISNN), 666-751 (THTF…KGNN), and 765-789 (PTRF…YNQH). The span at 113–123 (NNTDDEQEQEQ) shows a compositional bias: acidic residues. Composition is skewed to low complexity over residues 124 to 141 (EQQQ…TPIK), 151 to 194 (TSQT…ITPI), 201 to 213 (SIST…LRSS), and 225 to 270 (TSST…THNS). Residues 274 to 290 (IDDDDGDNNDEINDEND) are compositionally biased toward acidic residues. 2 stretches are compositionally biased toward low complexity: residues 291-326 (INSN…NNNN) and 429-491 (SNNS…NNNN). Positions 523 to 549 (SVNFDRNQNQKSPFLNNTSMPNINFNE) are enriched in polar residues. Low complexity-rich tracts occupy residues 550–581 (QSQQ…SINY), 602–617 (TSGS…NNSK), 696–722 (HIMN…SGSN), and 766–789 (TRFN…YNQH).

This is an uncharacterized protein from Dictyostelium discoideum (Social amoeba).